Reading from the N-terminus, the 315-residue chain is Mycothiol acetyltransferase (315 aa).

N-acetyltransferase domains follow at residues 4–141 (LDWR…RPLR) and 152–315 (VVIR…GTDN). Residue Glu36 participates in 1D-myo-inositol 2-(L-cysteinylamino)-2-deoxy-alpha-D-glucopyranoside binding. Acetyl-CoA is bound by residues 80–82 (LVV) and 88–93 (RRGIGT). Residues Glu179, Lys224, and Glu234 each contribute to the 1D-myo-inositol 2-(L-cysteinylamino)-2-deoxy-alpha-D-glucopyranoside site. Acetyl-CoA is bound by residues 238 to 240 (LGV) and 245 to 251 (QRRGLGQ). Position 282 (Tyr282) interacts with 1D-myo-inositol 2-(L-cysteinylamino)-2-deoxy-alpha-D-glucopyranoside. 287 to 292 (NVAAVR) serves as a coordination point for acetyl-CoA.

Belongs to the acetyltransferase family. MshD subfamily. In terms of assembly, monomer.

It carries out the reaction 1D-myo-inositol 2-(L-cysteinylamino)-2-deoxy-alpha-D-glucopyranoside + acetyl-CoA = mycothiol + CoA + H(+). Its function is as follows. Catalyzes the transfer of acetyl from acetyl-CoA to desacetylmycothiol (Cys-GlcN-Ins) to form mycothiol. In Mycobacterium bovis (strain ATCC BAA-935 / AF2122/97), this protein is Mycothiol acetyltransferase.